Here is a 298-residue protein sequence, read N- to C-terminus: Oligodendrocyte transcription factor 2 (298 aa).

Residues 1-13 (MDSDASLVSSRPS) show a composition bias toward polar residues. 2 disordered regions span residues 1-60 (MDSD…SAEL) and 79-102 (SSSS…MTEP). Residues 26–41 (NKGGGGGGGGGGGFTG) are compositionally biased toward gly residues. Low complexity predominate over residues 79–91 (SSSSSASSASSAS). In terms of domain architecture, bHLH spans 106–160 (QLRLKINSRERKRMHDLNIAMDGLREVMPYAHGPSVRKLSKIATLLLARNYILML).

The protein resides in the nucleus. Functionally, required for oligodendrocyte and motor neuron specification in the spinal cord. This Gallus gallus (Chicken) protein is Oligodendrocyte transcription factor 2 (OLIG2).